The chain runs to 582 residues: Semenogelin-2 (582 aa).

An N-terminal signal peptide occupies residues 1-23; sequence MKSIILFVLSLLLILEKQAAVMG. Disordered regions lie at residues 26–65, 132–159, 272–295, 318–358, 379–417, and 439–582; these read CGSK…SFSI, GGQA…SSQY, NLNQ…RTEE, TEEK…ERHL, EEQI…EERR, and EEQI…PVST. Composition is skewed to polar residues over residues 31–40 and 137–159; these read QLPSGSSQFP and RGTQ…SSQY. Residues 325–335 show a composition bias toward polar residues; it reads KSQNQVTIHSQ. Basic and acidic residues predominate over residues 336-345; that stretch reads GQEHGHKENK. Polar residues-rich tracts occupy residues 379 to 397, 439 to 457, 487 to 496, and 506 to 524; these read EEQI…SQAQ, KDVSQSSTSF, and SQIQ…QNAK. Basic and acidic residues-rich tracts occupy residues 525-552 and 559-582; these read GKSD…ESSE and TEHE…PVST.

It belongs to the semenogelin family. Interacts with SERPINA5.

The protein localises to the secreted. Its function is as follows. Participates in the formation of a gel matrix (sperm coagulum) entrapping the accessory gland secretions and ejaculated spermatozoa. The polypeptide is Semenogelin-2 (SEMG2) (Hylobates lar (Lar gibbon)).